The primary structure comprises 95 residues: Beta-defensin 132 (95 aa).

The signal sequence occupies residues 1–22 (MKFLLLVLAALGFLTQVIPASA). Cystine bridges form between Cys27-Cys55, Cys35-Cys49, and Cys39-Cys56. Positions 74–95 (HWQSRRRNTQRKDKKQQTTVTS) are disordered. Residues 76-87 (QSRRRNTQRKDK) show a composition bias toward basic residues.

This sequence belongs to the beta-defensin family.

It localises to the secreted. Its function is as follows. Has antibacterial activity. The chain is Beta-defensin 132 (DEFB132) from Homo sapiens (Human).